Consider the following 167-residue polypeptide: Novel acetylcholine receptor chaperone (167 aa).

The Cytoplasmic portion of the chain corresponds to 1-5 (MASPR). Residues 6 to 26 (TVTIVALSVALGLFFVFMGTI) form a helical membrane-spanning segment. Residues 27–61 (KLTPRLSKDAYSEMKRAYKSYVRALPLLKKMGINS) lie on the Lumenal side of the membrane. The interval 43–54 (AYKSYVRALPLL) is interaction with NGFR. Residues 62–82 (ILLRKSIGALEVACGIVMTLV) traverse the membrane as a helical segment. Residues 83–88 (PGRPKD) lie on the Cytoplasmic side of the membrane. The helical transmembrane segment at 89–109 (VANFFLLLLVLAVLFFHQLVG) threads the bilayer. The Lumenal portion of the chain corresponds to 110-114 (DPLKR). The helical transmembrane segment at 115–132 (YAHALVFGILLTCRLLIA) threads the bilayer. The Cytoplasmic segment spans residues 133 to 167 (RKPEDRSSEKKPLPGNAEEQPSLYEKAPQGKVKVS). A disordered region spans residues 136–167 (EDRSSEKKPLPGNAEEQPSLYEKAPQGKVKVS).

This sequence belongs to the DoxX family. May interact with NGFR. Interacts with RPN1, RPN2 and CANX.

Its subcellular location is the peroxisome membrane. It is found in the cytoplasmic vesicle. It localises to the endoplasmic reticulum membrane. Functionally, molecular chaperone which mediates the proper assembly and functional expression of the nicotinic acetylcholine receptors (nAChRs) throughout the brain. Essential for the proper folding, assembly, function and surface trafficking of alpha-7 (CHRNA7), alpha-4-beta-2, alpha-3-beta-2 and alpha-3-beta-4 receptors. Stably associates with ribophorin-1 (RPN1) and ribophorin-2 (RPN2) (components of the oligosaccharyl transferase (OST) complex) and with calnexin (CANX), both of which are critical for NACHO-mediated effects on CHRNA7 assembly and function. Facilitates the proper folding and assembly of alpha-6-beta-2 and alpha-6-beta-2-beta-3 receptors and acts at early stages of the nAChRs subunit assembly. Promotes the expression of the alpha-4(2):beta-2(3) stoichiometric form over the alpha-4(3):beta-2(2) form. The protein is Novel acetylcholine receptor chaperone (TMEM35A) of Macaca fascicularis (Crab-eating macaque).